Reading from the N-terminus, the 515-residue chain is Carboxyl-terminal-processing peptidase 2, chloroplastic (515 aa).

Residues 198 to 286 (FKSLRSGTQG…SAVELAIRSG (89 aa)) form the PDZ domain. Residues serine 417 and lysine 442 each act as charge relay system in the active site.

Belongs to the peptidase S41A family.

The protein resides in the plastid. The protein localises to the chloroplast thylakoid lumen. The catalysed reaction is The enzyme shows specific recognition of a C-terminal tripeptide, Xaa-Yaa-Zaa, in which Xaa is preferably Ala or Leu, Yaa is preferably Ala or Tyr, and Zaa is preferably Ala, but then cleaves at a variable distance from the C-terminus. A typical cleavage is -Ala-Ala-|-Arg-Ala-Ala-Lys-Glu-Asn-Tyr-Ala-Leu-Ala-Ala.. Protease involved in the C-terminal processing of the chloroplastic D1 protein of photosystem II. This proteolytic processing is necessary to allow the light-driven assembly of the tetranuclear manganese cluster, which is responsible for photosynthetic water oxidation. The polypeptide is Carboxyl-terminal-processing peptidase 2, chloroplastic (CTPA2) (Arabidopsis thaliana (Mouse-ear cress)).